Consider the following 253-residue polypeptide: Glucosamine-6-phosphate deaminase (253 aa).

Aspartate 67 acts as the Proton acceptor; for enolization step in catalysis. Catalysis depends on asparagine 136, which acts as the For ring-opening step. Residue histidine 138 is the Proton acceptor; for ring-opening step of the active site. Glutamate 143 serves as the catalytic For ring-opening step.

It belongs to the glucosamine/galactosamine-6-phosphate isomerase family. NagB subfamily.

It catalyses the reaction alpha-D-glucosamine 6-phosphate + H2O = beta-D-fructose 6-phosphate + NH4(+). It functions in the pathway amino-sugar metabolism; N-acetylneuraminate degradation; D-fructose 6-phosphate from N-acetylneuraminate: step 5/5. Its function is as follows. Catalyzes the reversible isomerization-deamination of glucosamine 6-phosphate (GlcN6P) to form fructose 6-phosphate (Fru6P) and ammonium ion. This is Glucosamine-6-phosphate deaminase from Thermoanaerobacter pseudethanolicus (strain ATCC 33223 / 39E) (Clostridium thermohydrosulfuricum).